The sequence spans 946 residues: Translation initiation factor IF-2 (946 aa).

Disordered regions lie at residues alanine 58 to isoleucine 250 and valine 301 to serine 324. Low complexity-rich tracts occupy residues glutamate 102–alanine 165 and alanine 174–glutamine 185. Over residues proline 186–arginine 211 the composition is skewed to pro residues. The segment covering proline 212–glutamine 229 has biased composition (low complexity). The 170-residue stretch at isoleucine 445–lysine 614 folds into the tr-type G domain. Positions glycine 454–threonine 461 are G1. Glycine 454–threonine 461 serves as a coordination point for GTP. The interval glycine 479–histidine 483 is G2. Residues aspartate 500–glycine 503 form a G3 region. GTP is bound by residues aspartate 500 to histidine 504 and asparagine 554 to aspartate 557. Residues asparagine 554–aspartate 557 form a G4 region. The interval serine 590–arginine 592 is G5.

This sequence belongs to the TRAFAC class translation factor GTPase superfamily. Classic translation factor GTPase family. IF-2 subfamily.

Its subcellular location is the cytoplasm. One of the essential components for the initiation of protein synthesis. Protects formylmethionyl-tRNA from spontaneous hydrolysis and promotes its binding to the 30S ribosomal subunits. Also involved in the hydrolysis of GTP during the formation of the 70S ribosomal complex. This is Translation initiation factor IF-2 from Anaeromyxobacter sp. (strain K).